The following is a 429-amino-acid chain: D-amino acid dehydrogenase (429 aa).

Residue Val-3–Trp-17 coordinates FAD.

The protein belongs to the DadA oxidoreductase family. FAD serves as cofactor.

The enzyme catalyses a D-alpha-amino acid + A + H2O = a 2-oxocarboxylate + AH2 + NH4(+). The protein operates within amino-acid degradation; D-alanine degradation; NH(3) and pyruvate from D-alanine: step 1/1. Functionally, oxidative deamination of D-amino acids. The chain is D-amino acid dehydrogenase from Xanthomonas euvesicatoria pv. vesicatoria (strain 85-10) (Xanthomonas campestris pv. vesicatoria).